We begin with the raw amino-acid sequence, 245 residues long: 8-amino-3,8-dideoxy-manno-octulosonate cytidylyltransferase (245 aa).

The protein belongs to the KdsB family.

The protein resides in the cytoplasm. It carries out the reaction 8-amino-3,8-dideoxy-alpha-D-manno-octulosonate + CTP = CMP-8-amino-3,8-dideoxy-alpha-D-manno-oct-2-ulosonate + diphosphate. It functions in the pathway bacterial outer membrane biogenesis; lipopolysaccharide biosynthesis. Activates KDO8N (a required 8-carbon sugar) for incorporation into bacterial lipopolysaccharide in the Shewanella genus. In Shewanella baltica (strain OS223), this protein is 8-amino-3,8-dideoxy-manno-octulosonate cytidylyltransferase.